We begin with the raw amino-acid sequence, 209 residues long: Probable phosphatidylglycerophosphate synthase (209 aa).

4 helical membrane-spanning segments follow: residues 32 to 52, 105 to 125, 147 to 167, and 171 to 191; these read ILTLLRLVMVPVFLLALFYGG, ALIGLSMLGDLPWWVTVLILT, WGGKLKTFVQAVAIGLFVLPL, and LHVAAVVVMAAAILLTVITGV.

Belongs to the CDP-alcohol phosphatidyltransferase class-I family.

It localises to the cell membrane. The enzyme catalyses a CDP-1,2-diacyl-sn-glycerol + sn-glycerol 3-phosphate = a 1,2-diacyl-sn-glycero-3-phospho-(1'-sn-glycero-3'-phosphate) + CMP + H(+). It participates in lipid metabolism; phospholipid metabolism. In terms of biological role, probably catalyzes the synthesis of phosphatidylglycerophosphate by transferring a phosphatidyl group from CDP-diacylglycerol to glycerol 3-phosphate. The sequence is that of Probable phosphatidylglycerophosphate synthase from Mycobacterium tuberculosis (strain CDC 1551 / Oshkosh).